Here is a 222-residue protein sequence, read N- to C-terminus: Hexitol phosphatase B (222 aa).

Asp13 functions as the Nucleophile in the catalytic mechanism. A divalent metal cation-binding residues include Asp13 and Asp15. Residues 13–15 (DMD), 115–116 (SA), and Lys148 each bind substrate. Asp15 functions as the Proton donor in the catalytic mechanism. Asp173 contributes to the a divalent metal cation binding site.

The protein belongs to the HAD-like hydrolase superfamily. CbbY/CbbZ/Gph/YieH family. It depends on Mg(2+) as a cofactor. Requires Mn(2+) as cofactor. Co(2+) is required as a cofactor. The cofactor is Zn(2+).

It catalyses the reaction sugar phosphate + H2O = sugar + phosphate.. The catalysed reaction is 2-deoxy-D-glucose 6-phosphate + H2O = 2-deoxy-D-glucose + phosphate. It carries out the reaction D-mannitol 1-phosphate + H2O = D-mannitol + phosphate. The enzyme catalyses D-sorbitol 6-phosphate + H2O = D-sorbitol + phosphate. Functionally, sugar-phosphate phosphohydrolase that catalyzes the dephosphorylation of D-mannitol 1-phosphate and D-sorbitol 6-phosphate. Also catalyzes the dephosphorylation of 2-deoxyglucose 6-phosphate (2dGlu6P); this is a biologically important activity in vivo since it contributes to the elimination of this toxic compound and plays an important role in the resistance of E.coli to 2-deoxyglucose. The protein is Hexitol phosphatase B of Escherichia coli O157:H7.